Consider the following 52-residue polypeptide: Proteinase inhibitor (52 aa).

Pyrrolidone carboxylic acid is present on glutamine 1. Disulfide bonds link cysteine 3-cysteine 40, cysteine 6-cysteine 24, cysteine 7-cysteine 36, and cysteine 13-cysteine 49.

The protein belongs to the protease inhibitor I20 (potato type II proteinase inhibitor) family.

It is found in the secreted. This is Proteinase inhibitor from Solanum melongena (Eggplant).